The primary structure comprises 157 residues: NAD(P)H-quinone oxidoreductase subunit N (157 aa).

The protein belongs to the complex I NdhN subunit family. In terms of assembly, NDH-1 can be composed of about 15 different subunits; different subcomplexes with different compositions have been identified which probably have different functions.

The protein localises to the cellular thylakoid membrane. It catalyses the reaction a plastoquinone + NADH + (n+1) H(+)(in) = a plastoquinol + NAD(+) + n H(+)(out). The catalysed reaction is a plastoquinone + NADPH + (n+1) H(+)(in) = a plastoquinol + NADP(+) + n H(+)(out). Its function is as follows. NDH-1 shuttles electrons from an unknown electron donor, via FMN and iron-sulfur (Fe-S) centers, to quinones in the respiratory and/or the photosynthetic chain. The immediate electron acceptor for the enzyme in this species is believed to be plastoquinone. Couples the redox reaction to proton translocation, and thus conserves the redox energy in a proton gradient. Cyanobacterial NDH-1 also plays a role in inorganic carbon-concentration. This chain is NAD(P)H-quinone oxidoreductase subunit N, found in Synechococcus sp. (strain CC9902).